We begin with the raw amino-acid sequence, 185 residues long: Ribosome-recycling factor (185 aa).

The segment at I139–K159 is disordered. Basic and acidic residues predominate over residues S141–K159.

This sequence belongs to the RRF family.

Its subcellular location is the cytoplasm. Functionally, responsible for the release of ribosomes from messenger RNA at the termination of protein biosynthesis. May increase the efficiency of translation by recycling ribosomes from one round of translation to another. The chain is Ribosome-recycling factor from Sorangium cellulosum (strain So ce56) (Polyangium cellulosum (strain So ce56)).